A 235-amino-acid chain; its full sequence is Small ribosomal subunit protein eS6 (235 aa).

A disordered region spans residues 190–212 (GFHPRERGERRRKSVRGRMIPDP).

It belongs to the eukaryotic ribosomal protein eS6 family.

This is Small ribosomal subunit protein eS6 from Aeropyrum pernix (strain ATCC 700893 / DSM 11879 / JCM 9820 / NBRC 100138 / K1).